A 193-amino-acid polypeptide reads, in one-letter code: MAKKQNILSPIIRITFTFLVLCGLVYPLIVTGIAQAVMKDNADGSLIYNDKNEVIGSTLIGQNFTDPRYFHGRVSSIEYKAEASGSNNYAPSNPDLEKRVEKSIEEWKKQNPSVPVTEVPIDLVTNSGSGLDPDISPKAASVQVERISKLTNIPKETLDQLIKDQTEGAALGLFGETRVNVLKLNLELQKIMK.

Residues 14–34 traverse the membrane as a helical segment; that stretch reads ITFTFLVLCGLVYPLIVTGIA.

This sequence belongs to the KdpC family. The system is composed of three essential subunits: KdpA, KdpB and KdpC.

The protein resides in the cell membrane. Part of the high-affinity ATP-driven potassium transport (or Kdp) system, which catalyzes the hydrolysis of ATP coupled with the electrogenic transport of potassium into the cytoplasm. This subunit acts as a catalytic chaperone that increases the ATP-binding affinity of the ATP-hydrolyzing subunit KdpB by the formation of a transient KdpB/KdpC/ATP ternary complex. The polypeptide is Potassium-transporting ATPase KdpC subunit (Bacillus thuringiensis subsp. konkukian (strain 97-27)).